The following is a 58-amino-acid chain: Large ribosomal subunit protein bL32 (58 aa).

The interval M1–T23 is disordered. Residues S9–Y20 show a composition bias toward basic residues.

It belongs to the bacterial ribosomal protein bL32 family.

This is Large ribosomal subunit protein bL32 (rpmF) from Lactococcus lactis subsp. cremoris (Streptococcus cremoris).